Consider the following 581-residue polypeptide: Proline--tRNA ligase (581 aa).

This sequence belongs to the class-II aminoacyl-tRNA synthetase family. ProS type 1 subfamily. In terms of assembly, homodimer.

It localises to the cytoplasm. It catalyses the reaction tRNA(Pro) + L-proline + ATP = L-prolyl-tRNA(Pro) + AMP + diphosphate. In terms of biological role, catalyzes the attachment of proline to tRNA(Pro) in a two-step reaction: proline is first activated by ATP to form Pro-AMP and then transferred to the acceptor end of tRNA(Pro). As ProRS can inadvertently accommodate and process non-cognate amino acids such as alanine and cysteine, to avoid such errors it has two additional distinct editing activities against alanine. One activity is designated as 'pretransfer' editing and involves the tRNA(Pro)-independent hydrolysis of activated Ala-AMP. The other activity is designated 'posttransfer' editing and involves deacylation of mischarged Ala-tRNA(Pro). The misacylated Cys-tRNA(Pro) is not edited by ProRS. The chain is Proline--tRNA ligase from Chlamydia trachomatis serovar D (strain ATCC VR-885 / DSM 19411 / UW-3/Cx).